The sequence spans 1064 residues: MKIATVSVLLPLALCLIQDAASKNEDQEMCHEFQAFMKNGKLFCPQDKKFFQSLDGIMFINKCATCKMILEKEAKSQKRARHLARAPKATAPTELNCDDFKKGERDGDFICPDYYEAVCGTDGKTYDNRCALCAENAKTGSQIGVKSEGECKSSNPEQDVCSAFRPFVRDGRLGCTRENDPVLGPDGKTHGNKCAMCAELFLKEAENAKREGETRIRRNAEKDFCKEYEKQVRNGRLFCTRESDPVRGPDGRMHGNKCALCAEIFKQRFSEENSKTDQNLGKAEEKTKVKREIVKLCSQYQNQAKNGILFCTRENDPIRGPDGKMHGNLCSMCQAYFQAENEEKKKAEARARNKRESGKATSYAELCSEYRKLVRNGKLACTRENDPIQGPDGKVHGNTCSMCEVFFQAEEEEKKKKEGKSRNKRQSKSTASFEELCSEYRKSRKNGRLFCTRENDPIQGPDGKMHGNTCSMCEAFFQQEERARAKAKREAAKEICSEFRDQVRNGTLICTREHNPVRGPDGKMHGNKCAMCASVFKLEEEEKKNDKEEKGKVEAEKVKREAVQELCSEYRHYVRNGRLPCTRENDPIEGLDGKIHGNTCSMCEAFFQQEAKEKERAEPRAKVKREAEKETCDEFRRLLQNGKLFCTRENDPVRGPDGKTHGNKCAMCKAVFQKENEERKRKEEEDQRNAAGHGSSGGGGGNTQDECAEYREQMKNGRLSCTRESDPVRDADGKSYNNQCTMCKAKLEREAERKNEYSRSRSNGTGSESGKDTCDEFRSQMKNGKLICTRESDPVRGPDGKTHGNKCTMCKEKLEREAAEKKKKEDEDRSNTGERSNTGERSNDKEDLCREFRSMQRNGKLICTRENNPVRGPYGKMHINKCAMCQSIFDREANERKKKDEEKSSSKPSNNAKDECSEFRNYIRNNELICPRENDPVHGADGKFYTNKCYMCRAVFLTEALERAKLQEKPSHVRASQEEDSPDSFSSLDSEMCKDYRVLPRIGYLCPKDLKPVCGDDGQTYNNPCMLCHENLIRQTNTHIRSTGKCEESSTPGTTAASMPPSDE.

An N-terminal signal peptide occupies residues 1-22 (MKIATVSVLLPLALCLIQDAAS). A Kazal-like 1; atypical domain is found at 28–66 (EMCHEFQAFMKNGKLFCPQDKKFFQSLDGIMFINKCATC). 21 disulfides stabilise this stretch: cysteine 30/cysteine 66, cysteine 44/cysteine 63, cysteine 97/cysteine 133, cysteine 111/cysteine 130, cysteine 119/cysteine 151, cysteine 161/cysteine 197, cysteine 175/cysteine 194, cysteine 225/cysteine 261, cysteine 239/cysteine 258, cysteine 297/cysteine 333, cysteine 311/cysteine 330, cysteine 367/cysteine 403, cysteine 381/cysteine 400, cysteine 437/cysteine 473, cysteine 451/cysteine 470, cysteine 496/cysteine 532, cysteine 510/cysteine 529, cysteine 567/cysteine 603, cysteine 581/cysteine 600, cysteine 632/cysteine 668, and cysteine 646/cysteine 665. Kazal-like domains lie at 91–153 (APTE…ECKS), 155–216 (NPEQ…ETRI), 219–285 (NAEK…KAEE), 291–352 (REIV…ARAR), 361–423 (TSYA…KSRN), 431–489 (ASFE…KAKR), 490–551 (EAAK…EEKG), 561–622 (EAVQ…PRAK), 626–688 (EAEK…EDQR), 701–757 (GNTQ…KNEY), 768–830 (ESGK…EDRS), 843–905 (NDKE…EKSS), 910–971 (NNAK…EKPS), and 987–1048 (SLDS…KCEE). The segment covering 676–688 (NEERKRKEEEDQR) has biased composition (basic and acidic residues). The tract at residues 676–705 (NEERKRKEEEDQRNAAGHGSSGGGGGNTQD) is disordered. Cystine bridges form between cysteine 707/cysteine 743, cysteine 721/cysteine 740, cysteine 774/cysteine 810, cysteine 788/cysteine 807, cysteine 849/cysteine 885, and cysteine 863/cysteine 882. A disordered region spans residues 751–775 (AERKNEYSRSRSNGTGSESGKDTCD). The segment at 818 to 849 (AAEKKKKEDEDRSNTGERSNTGERSNDKEDLC) is disordered. A compositionally biased stretch (basic and acidic residues) spans 895 to 905 (ERKKKDEEKSS). The disordered stretch occupies residues 895–915 (ERKKKDEEKSSSKPSNNAKDE). Intrachain disulfides connect cysteine 916/cysteine 952 and cysteine 930/cysteine 949. The span at 967–977 (QEKPSHVRASQ) shows a compositional bias: basic and acidic residues. The segment at 967-987 (QEKPSHVRASQEEDSPDSFSS) is disordered. Cystine bridges form between cysteine 993/cysteine 1028, cysteine 1006/cysteine 1025, and cysteine 1014/cysteine 1046. The interval 1041–1064 (RSTGKCEESSTPGTTAASMPPSDE) is disordered.

Post-translationally, proteolytically processed by furin in individual domains (D1, D5, D6, D8 through D11, and D9 through D15) exhibiting various inhibitory potentials for multiple proteases. In terms of tissue distribution, highly expressed in the thymus and stratum corneum. Also found in the oral mucosa, parathyroid gland, Bartholin's glands, tonsils, and vaginal epithelium. Very low levels are detected in lung, kidney, and prostate.

It is found in the secreted. In terms of biological role, serine protease inhibitor, probably important for the anti-inflammatory and/or antimicrobial protection of mucous epithelia. Contribute to the integrity and protective barrier function of the skin by regulating the activity of defense-activating and desquamation-involved proteases. Inhibits KLK5, it's major target, in a pH-dependent manner. Inhibits KLK7, KLK14 CASP14, and trypsin. The chain is Serine protease inhibitor Kazal-type 5 (SPINK5) from Homo sapiens (Human).